Reading from the N-terminus, the 108-residue chain is UPF0060 membrane protein CJA_3703 (108 aa).

A run of 4 helical transmembrane segments spans residues 6-26, 31-51, 61-81, and 85-105; these read LLFVVTALAEIIGCFLPYLWL, SIWLLLPAALSLALFAWLLTL, AAYGGVYVAVALLWLYWVDGV, and AYDWAGAAVALLGMAIIAMGW.

It belongs to the UPF0060 family.

It localises to the cell inner membrane. The polypeptide is UPF0060 membrane protein CJA_3703 (Cellvibrio japonicus (strain Ueda107) (Pseudomonas fluorescens subsp. cellulosa)).